A 909-amino-acid chain; its full sequence is Translation initiation factor IF-2 (909 aa).

The tract at residues Leu49–Gln314 is disordered. Composition is skewed to basic and acidic residues over residues Asp99–Gln177, Ile186–Ser236, and Arg255–Arg270. Residues Ala271–Asn285 show a composition bias toward basic residues. The segment covering Lys286–Ala299 has biased composition (basic and acidic residues). The tr-type G domain occupies Pro408–Lys577. Positions Gly417–Thr424 are G1. Position 417-424 (Gly417–Thr424) interacts with GTP. The segment at Gly442–His446 is G2. The segment at Asp463–Gly466 is G3. GTP is bound by residues Asp463–His467 and Asn517–Asp520. A G4 region spans residues Asn517–Asp520. Residues Ser553–Lys555 form a G5 region.

The protein belongs to the TRAFAC class translation factor GTPase superfamily. Classic translation factor GTPase family. IF-2 subfamily.

Its subcellular location is the cytoplasm. Its function is as follows. One of the essential components for the initiation of protein synthesis. Protects formylmethionyl-tRNA from spontaneous hydrolysis and promotes its binding to the 30S ribosomal subunits. Also involved in the hydrolysis of GTP during the formation of the 70S ribosomal complex. The chain is Translation initiation factor IF-2 from Photorhabdus laumondii subsp. laumondii (strain DSM 15139 / CIP 105565 / TT01) (Photorhabdus luminescens subsp. laumondii).